The chain runs to 213 residues: RxLR effector protein PexRD1 (213 aa).

Positions 1 to 19 (MRACNTLLPTAIVLTSCDA) are cleaved as a signal peptide. A RxLR-dEER motif is present at residues 50 to 77 (RQLRGFYATENTDPVNNQDTAHEDGEER).

The protein belongs to the RxLR effector family.

Its subcellular location is the secreted. The protein localises to the host nucleus. Functionally, effector that enhances P.infestans colonization of Nicotiana benthamiana leaves. The protein is RxLR effector protein PexRD1 of Phytophthora infestans (strain T30-4) (Potato late blight agent).